A 261-amino-acid chain; its full sequence is Transmembrane protein 187 (261 aa).

6 helical membrane passes run 8–28 (AFVHVAVAGGLCAVAVFTGIF), 43–63 (APVAGLPAFLAMPFNSLVNMA), 88–108 (VFAAMALLYGPVQWLRLWTQW), 113–133 (VLDQWLTLPIFAWPVAWCLYL), 140–162 (WLFLSLECVSLASYGLALLHPQG), and 190–210 (SATYLALGVLSCLGFVVLKLC).

Ubiquitous.

It is found in the membrane. The protein is Transmembrane protein 187 (TMEM187) of Homo sapiens (Human).